The following is a 156-amino-acid chain: Small ribosomal subunit protein uS7 (156 aa).

Belongs to the universal ribosomal protein uS7 family. In terms of assembly, part of the 30S ribosomal subunit. Contacts proteins S9 and S11.

In terms of biological role, one of the primary rRNA binding proteins, it binds directly to 16S rRNA where it nucleates assembly of the head domain of the 30S subunit. Is located at the subunit interface close to the decoding center, probably blocks exit of the E-site tRNA. The protein is Small ribosomal subunit protein uS7 of Pectobacterium carotovorum subsp. carotovorum (strain PC1).